The sequence spans 283 residues: Peflin (283 aa).

Repeat copies occupy residues 21-30 (PQTNYYGGQQ), 36-44 (QPAASYGRP), 45-54 (APGAPYGSPP), 55-62 (SGGVYGHP), 71-79 (APGGPYGGQ), 80-87 (APGGPYSV), 88-95 (PGSTPYGS), and 96-104 (QQHGSYGQG). Positions 21–104 (PQTNYYGGQQ…SQQHGSYGQG (84 aa)) are 8 X 9 AA approximate tandem repeat of [AP]-P-G-G-P-Y-G-G-P-P. A compositionally biased stretch (low complexity) spans 37-70 (PAASYGRPAPGAPYGSPPSGGVYGHPVPGSAAPG). Residues 37-113 (PAASYGRPAP…GAPAGNIPPG (77 aa)) are disordered. Gly residues predominate over residues 71 to 81 (APGGPYGGQAP). Positions 93–104 (YGSQQHGSYGQG) are enriched in low complexity. EF-hand domains follow at residues 113–148 (GVDP…TNWS), 154–179 (TCTM…SALW), 180–215 (RFIQ…MGYQ), 216–252 (LSPQ…LQSM), and 253–282 (TEAF…TTRL). 5 residues coordinate Ca(2+): aspartate 126, aspartate 128, serine 130, tyrosine 132, and glutamate 137. Aspartate 193, aspartate 195, serine 197, serine 199, and glutamate 204 together coordinate Ca(2+).

Heterodimer; heterodimerizes (via the EF-hand 5) with pdcd6.

It localises to the cytoplasm. The protein localises to the endoplasmic reticulum. Its subcellular location is the membrane. It is found in the cytoplasmic vesicle. The protein resides in the COPII-coated vesicle membrane. Calcium-binding protein that acts as an adapter that bridges unrelated proteins or stabilizes weak protein-protein complexes in response to calcium. Acts as a negative regulator of ER-Golgi transport. The sequence is that of Peflin from Xenopus laevis (African clawed frog).